The primary structure comprises 369 residues: Phospho-N-acetylmuramoyl-pentapeptide-transferase (369 aa).

The next 10 membrane-spanning stretches (helical) occupy residues Ala-3 to Ile-23, Gly-53 to Trp-73, Val-81 to Leu-101, Trp-118 to Leu-138, Phe-162 to Val-182, Leu-198 to Phe-218, Pro-240 to Trp-260, Ile-267 to Leu-287, Thr-290 to Leu-310, and Phe-347 to Ile-367.

This sequence belongs to the glycosyltransferase 4 family. MraY subfamily. Requires Mg(2+) as cofactor.

The protein localises to the cell membrane. The catalysed reaction is UDP-N-acetyl-alpha-D-muramoyl-L-alanyl-gamma-D-glutamyl-meso-2,6-diaminopimeloyl-D-alanyl-D-alanine + di-trans,octa-cis-undecaprenyl phosphate = di-trans,octa-cis-undecaprenyl diphospho-N-acetyl-alpha-D-muramoyl-L-alanyl-D-glutamyl-meso-2,6-diaminopimeloyl-D-alanyl-D-alanine + UMP. Its pathway is cell wall biogenesis; peptidoglycan biosynthesis. Catalyzes the initial step of the lipid cycle reactions in the biosynthesis of the cell wall peptidoglycan: transfers peptidoglycan precursor phospho-MurNAc-pentapeptide from UDP-MurNAc-pentapeptide onto the lipid carrier undecaprenyl phosphate, yielding undecaprenyl-pyrophosphoryl-MurNAc-pentapeptide, known as lipid I. In Clavibacter michiganensis subsp. michiganensis (strain NCPPB 382), this protein is Phospho-N-acetylmuramoyl-pentapeptide-transferase.